Here is a 226-residue protein sequence, read N- to C-terminus: Small ribosomal subunit protein uS3 (226 aa).

The 69-residue stretch at 39–107 (IRKFIKNKLY…NILINITEIK (69 aa)) folds into the KH type-2 domain.

This sequence belongs to the universal ribosomal protein uS3 family. Part of the 30S ribosomal subunit. Forms a tight complex with proteins S10 and S14.

Binds the lower part of the 30S subunit head. Binds mRNA in the 70S ribosome, positioning it for translation. The polypeptide is Small ribosomal subunit protein uS3 (Acetivibrio thermocellus (strain ATCC 27405 / DSM 1237 / JCM 9322 / NBRC 103400 / NCIMB 10682 / NRRL B-4536 / VPI 7372) (Clostridium thermocellum)).